The sequence spans 285 residues: Undecaprenyl-diphosphatase (285 aa).

The next 7 membrane-spanning stretches (helical) occupy residues 40-60, 89-109, 137-157, 171-191, 209-229, 241-261, and 265-285; these read GPLIDVAVHVGSLLAIIVYFF, LFWWIVLGTIPAVAFGLAIKL, DLIAFNLIVYGIALGLADWLG, GLIVGIAQALAIIPGTSRSGV, FSFLLSIPAVAGAGVLIVPEI, LIAGVLTFIAAFLTMAFLMNF, and ASMLVFVFYRVAMGCALLAFF.

This sequence belongs to the UppP family.

It localises to the cell inner membrane. It catalyses the reaction di-trans,octa-cis-undecaprenyl diphosphate + H2O = di-trans,octa-cis-undecaprenyl phosphate + phosphate + H(+). Its function is as follows. Catalyzes the dephosphorylation of undecaprenyl diphosphate (UPP). Confers resistance to bacitracin. This chain is Undecaprenyl-diphosphatase, found in Erythrobacter litoralis (strain HTCC2594).